We begin with the raw amino-acid sequence, 974 residues long: Kinesin-like protein KIN-7A (974 aa).

The tract at residues 1–29 (MTIKTPGTPVSKMDRTPAVTPGGSSRSRE) is disordered. The 323-residue stretch at 31 to 353 (KIVVTVRLRP…LYFANRAKEV (323 aa)) folds into the Kinesin motor domain. 117 to 124 (GQTSSGKT) contacts ATP. Coiled-coil stretches lie at residues 362 to 435 (VVSD…KGLN) and 565 to 603 (SANL…VMSL). Disordered regions lie at residues 605–649 (SNIS…PCSP) and 663–713 (NKAP…SSVN). The span at 616–628 (TKNHHHQSKKKKL) shows a compositional bias: basic residues. 2 stretches are compositionally biased toward polar residues: residues 638-649 (NRQNFLKSPCSP) and 666-682 (PQEN…TPQG). Over residues 683 to 693 (SEKETPQKGEE) the composition is skewed to basic and acidic residues.

The protein belongs to the TRAFAC class myosin-kinesin ATPase superfamily. Kinesin family. KIN-7 subfamily. Post-translationally, phosphorylated at Thr-145, Thr-687 and Thr-703 by CDKAs and CDKBs. Phosphorylated NACK1 fails to mediate cytokinesis. Expressed in roots, flowers, pollen mother cells and embryos.

Its subcellular location is the cytoplasm. The protein localises to the cytoskeleton. The protein resides in the phragmoplast. In terms of biological role, probable plus end-directed motor protein that functions in the NACK-PQR (ANP1-MKK6-MPK4) MAP kinase signaling pathway, which is essential for somatic cell cytokinesis, especially for the cell-plate formation and its expansion. Regulates the activity and the localization of ANP1, probably by association through the non-catalytic region of the kinase. Functionally redundant with NACK2 and essential to promote the progression of cytokinesis and for cellularization (formation of the cell plate) during microgametogenesis and megagametogenesis. In Arabidopsis thaliana (Mouse-ear cress), this protein is Kinesin-like protein KIN-7A.